A 608-amino-acid polypeptide reads, in one-letter code: Albumin (608 aa).

The first 18 residues, 1–18 (MKWVTFISLLFLFSSAYS), serve as a signal peptide directing secretion. Positions 19-24 (RGVFRR) are excised as a propeptide. Albumin domains lie at 19-210 (RGVF…DALE), 211-403 (GKSL…EFQP), and 404-601 (LVDE…KLVE). Position 27 (His-27) interacts with Cu cation. Ser-29 is subject to Phosphoserine. Glu-30 and Asp-37 together coordinate Ca(2+). Cys-77 and Cys-86 are joined by a disulfide. Phosphoserine occurs at positions 82 and 89. His-91 is a binding site for Zn(2+). 6 disulfide bridges follow: Cys-99–Cys-115, Cys-114–Cys-125, Cys-148–Cys-193, Cys-192–Cys-201, Cys-224–Cys-270, and Cys-269–Cys-277. Residue Thr-107 is modified to Phosphothreonine. An N6-succinyllysine modification is found at Lys-229. Glu-268 serves as a coordination point for Ca(2+). Residues His-271 and Asp-273 each contribute to the Zn(2+) site. Residues Asp-273, Glu-276, Asp-279, and Asp-283 each contribute to the Ca(2+) site. Disulfide bonds link Cys-289–Cys-303, Cys-302–Cys-313, Cys-340–Cys-385, Cys-384–Cys-393, Cys-416–Cys-462, Cys-461–Cys-472, Cys-485–Cys-501, and Cys-500–Cys-511. Residue Ser-297 is modified to Phosphoserine. At Ser-443 the chain carries Phosphoserine. 2 positions are modified to phosphothreonine: Thr-444 and Thr-446. Lys-460 carries the N6-succinyllysine modification. At Ser-513 the chain carries Phosphoserine. Intrachain disulfides connect Cys-538-Cys-583 and Cys-582-Cys-591. Lys-558 is subject to N6-methyllysine. Thr-570 is subject to Phosphothreonine. The residue at position 588 (Lys-588) is an N6-succinyllysine.

Belongs to the ALB/AFP/VDB family. As to quaternary structure, interacts with FCGRT; this interaction regulates ALB homeostasis. Interacts with TASOR. In plasma, occurs in a covalently-linked complex with chromophore-bound alpha-1-microglobulin; this interaction does not prevent fatty acid binding to ALB. Post-translationally, phosphorylated by FAM20C in the extracellular medium. Plasma.

Its subcellular location is the secreted. Functionally, binds water, Ca(2+), Na(+), K(+), fatty acids, hormones, bilirubin and drugs. Its main function is the regulation of the colloidal osmotic pressure of blood. Major zinc transporter in plasma, typically binds about 80% of all plasma zinc. Major calcium and magnesium transporter in plasma, binds approximately 45% of circulating calcium and magnesium in plasma. Potentially has more than two calcium-binding sites and might additionally bind calcium in a non-specific manner. The shared binding site between zinc and calcium at residue Asp-273 suggests a crosstalk between zinc and calcium transport in the blood. The rank order of affinity is zinc &gt; calcium &gt; magnesium. Binds to the bacterial siderophore enterobactin and inhibits enterobactin-mediated iron uptake of E.coli from ferric transferrin, and may thereby limit the utilization of iron and growth of enteric bacteria such as E.coli. Does not prevent iron uptake by the bacterial siderophore aerobactin. This is Albumin (ALB) from Oryctolagus cuniculus (Rabbit).